The sequence spans 963 residues: Putative RNA Helicase B962L (963 aa).

One can recognise a Helicase ATP-binding domain in the interval 43-229 (IPTSLADRVL…FGIGKENIIL (187 aa)). 56–63 (SRTGSGKS) lines the ATP pocket. A DEAH box motif is present at residues 167-170 (DEAH). In terms of domain architecture, Helicase C-terminal spans 253–459 (ACETALTIHK…TIKKNKEGVF (207 aa)). Residues 521–541 (GYFWQAAISDIATILAVVSVV) form a helical membrane-spanning segment.

This sequence belongs to the DEAD box helicase family. DEAH subfamily.

Its subcellular location is the host membrane. The protein localises to the virion. It carries out the reaction ATP + H2O = ADP + phosphate + H(+). In Ornithodoros (relapsing fever ticks), this protein is Putative RNA Helicase B962L.